The primary structure comprises 341 residues: Shk1 kinase-binding protein 15 (341 aa).

WD repeat units follow at residues 33–70, 77–114, 119–157, 197–234, and 237–274; these read AHEGALTALAVDGIYLASTSSDETIKIFDHTRNVQIAD, IANACIRDMCFTKNHLLACHDNGQISMWSKGSWLLVHT, SHKGITGIAVHPSEKLALTVGGDGKLRLWDLVRGKGGKV, SSKSQLNALCLYQSKLIVGRDNGTVLVLDTSDGKILHE, and AHKKRVKSVYPVDDYLITASSDGSVCIWDKDWNLVIEH. The interval 293–341 is disordered; that stretch reads NSEPKNVEDEAAKRQSLDSETSETSSESESESEYYSTSKQPPVKRTKHA. Residues 297-309 are compositionally biased toward basic and acidic residues; the sequence is KNVEDEAAKRQSL.

In terms of biological role, negatively regulates pak1/shk1 kinase activity leading to proper execution of cytoskeletal remodeling and cytokinetic functions. Its function is as follows. Interacts with pak1/shk1. In Schizosaccharomyces pombe (strain 972 / ATCC 24843) (Fission yeast), this protein is Shk1 kinase-binding protein 15 (skb15).